The following is a 2383-amino-acid chain: MPSATAQDARAPIAIIGMSCRFPGDAEDPLKFWDLLKEGREAYSEKTHRYNEEAFYHPGGQFNNKRQNVLPVKGGYMLKQDPYVFDAAFFNITAAEAISFDPKQRIAMEVTYEAFENAGMTLQKAAGTRTACYIGTSMSDYRDSIVRDFGNYPKYHLLGTSDEMISNRISHFFDLRGPSATIETACSSSHVATHIACQSIQSGESDMAVVGGIGMLLVPESTMQLNNLGFLSAFGQSRAFDASGAGYGRGEGCGIFILKRLDKAMEDGDTIRAIIRGSGVNSDGWTQGVTMPSGDAQASLIEYVYKSNGLDYEGTQYVEAHGTGTKVGDPTEAEALHRTIGQPTPKRKKLWMGSVKTNIGHLEAAAGAASMVKGVLAMEHGFIPPTLHFKNPNPAIKFDEWQLGVPTKLMPWPACQTRRMSTSAFGMGGTNAHLVLERPNEPAIPILERGAIGVSRKNQKRLFVFSSHDQAGFKRICDRLVEHVDTLGPKSSNPDYLANLAHTLAVGRSGLTWKSSCFAENIVELREHLTSSSLPEGAVRAAGGQTRIGFVFTGQGAQWARMGVELMDRKVFGKSVAKSTALLQEMGCEWDPVVELSKSQKESQLVKPEISQPICTILQIALIDELRSWGIRPAKVVGHSSGEIAAAYCMGALTHRDALAAAYFRGKASANVKRRGGMMAVGTTPEDAKKLITETKAQATVACVNSPRSITLSGDVDALEALRETFEKQGVFARRLKVDVAYHSSHMRSCSAEYQSSIMDLEPSELDGANESKEPILMVSSVTGGLVDAEALGPYYWIRNLISPVLFSDALKELVCPADSGGSSDVDMLIEIGPHSALRAPIEQILSHHDIKNVEYASMLTRGESGSETILGFAAELFRRGVPFDIAKANDDAQCRLLTDLPPYPFNHSQQFRAESRLQRETLTQQNPTKSLIGAERPSLDEHERVWRGFINLDDEPWLRDHTVGSTVLFPGAAVITIVLEAAQQMAEAGKTIRSLTLRDISFMAMMTLLEGTPTEVITHVRPHLVATTGTTPATWWEFTVSSCTGVTSNVRNNCRGLFSINYEDSRSSHMEMELERFEGDRVATYHQIKKECVEVISKQAFYDTLARSALAYGPHFQGVDNCRPGNGQTAFEVIVSDLGETFNKDKLTRPFLIHGGTLDSIFQAWVGSTKDSNGPGSFGFEKPLLPKSIGELEISLDFPGEVGYSLNGLSTSKKHGFSEWSTDITMFDRNVSKLLLSVKDFHLAELEVEDADRPDRTEHVDVDPAEISSEPKWNYALDFMSTQEIKQVVETASSSDDKLMQFISLAIHQRPNLEILELVESANQLRQTAVSKLPRGRLLPNQASCAILGGDYDNNNESAAAFGRIFGLDSSEAVPSDVAPADLVIANFNISNLEDIAERLVVLAKPEARILLIADKKVDSSVTSLADKGFDLVFSTEADSESLSLYCFGKKEEPQPERLTNGSTGQEVVILEPSSLSAESDRFSKDLQHALDNIGYNVSTVTDIHGAHAAKARIYVSLLEIEQPVLENLSQSEFEGLRDLLLNCDRLLWITRGDGPSLQLVDGFSRTIRSEFAGVEFQVLHLSGKNSRQGPSLAAQIVFKQSTESEFREDDGHLQISRWYRSVEEDDHIRNHLLDSIRTVSLPVGGNIEDNSSYRLAVGKPGLLNTLHFVSDDNTEAPLADNEVEMQVKASGINFRDIMGSMGLLPVSGIGQEASGIVVRVGKLGASSLKPGDRISTLTVGGTHATRIRCDYRVAKKIPEGMSFEEAAGIPVVHCTAYYALVKLAKLRPGQSVLIHAAAGGTGQAALQLAKHLGLTIFATVGTDTKRALIREKYGVPDENIFHSRDGSFVKGIERATNGRGVDCVLNSLSGELLRLSWGCLATFGTFVEIGLRDITDNMRLDMRPFAKSTTFSFINMVTLLQENPDAMGEILESVFEMIHQNVLQPVFPVTVYPVGKVEEAFRLMQQGKHVGKMILSFAAGDARAPVLCRAKDSFKLDPNATYLFIGGLGGLGRSMAVGFVACGARNIAFLSRSGDSKPEAKAVVDELRELGTRVQVYLGDVSDEASFRGAMEQCSRELPPVKGVIQMAMVLRDVVFEKMKYDDWTTGLRPKVQGTWNLHTFFDKDRPLDFMIFFSSIAGVFGNPSQAQYAAGNTYQDSLAKYRRDRGLKAVSVNLGIMRDVGVIAEGDSHFMQQWEEVLGIREPAFHALIKSIINGQLETSNIREAAKCPVQVTVGLGTGDILARNKIREPDYFRDPRFGALAVCSSTSTAAASSGENGVSIASQLAGLSNEADPEEAAGPIITKALVSKLAKILQVPPSEIDSSRPMYRYGVDSLVAIEVRNWITKEMSANMSLMDILGAMPMEQFAVQIAKKSKLVGGS.

The 429-residue stretch at 10-438 (RAPIAIIGMS…GTNAHLVLER (429 aa)) folds into the Ketosynthase family 3 (KS3) domain. Catalysis depends on for beta-ketoacyl synthase activity residues Cys-186, His-321, and His-361. The segment at 550 to 881 (FVFTGQGAQW…GFAAELFRRG (332 aa)) is malonyl-CoA:ACP transacylase (MAT) domain. The segment at 930–1066 (KSLIGAERPS…GLFSINYEDS (137 aa)) is N-terminal hotdog fold. Residues 930 to 1253 (KSLIGAERPS…LAELEVEDAD (324 aa)) enclose the PKS/mFAS DH domain. The dehydratase (DH) domain stretch occupies residues 932 to 1250 (LIGAERPSLD…DFHLAELEVE (319 aa)). Catalysis depends on His-962, which acts as the Proton acceptor; for dehydratase activity. The segment at 1094–1253 (VEVISKQAFY…LAELEVEDAD (160 aa)) is C-terminal hotdog fold. Asp-1160 functions as the Proton donor; for dehydratase activity in the catalytic mechanism. Residues 1663–1977 (GLLNTLHFVS…QGKHVGKMIL (315 aa)) are enoyl reductase (ER) domain. Catalysis depends on Cys-1776, which acts as the Phosphocysteine intermediate. Positions 2002–2182 (ATYLFIGGLG…VSVNLGIMRD (181 aa)) are ketoreductase (KR) domain. Residues 2300 to 2377 (AAGPIITKAL…QFAVQIAKKS (78 aa)) form the Carrier domain. Ser-2337 is modified (O-(pantetheine 4'-phosphoryl)serine).

The protein operates within secondary metabolite biosynthesis. Reducing polyketide synthase; part of the gene cluster that mediates the biosynthesis of radicicol, a resorcylic acid lactone (RAL) that irreversibly inhibits the HSP90 molecular chaperone, an important target for cancer chemotherapy. The radicicol cluster encodes only two apparent post-PKS enzymes, a cytochrome P450 monooxygenase (rdc4) and a non-heme halogenase (rdc2) that could introduce the epoxide and the chlorine, respectively. If this cluster includes all the genes required for radicicol biosynthesis, the remaining structural features of radicicol are presumably generated by the PKSs rdc1 and rdc5. The C-2' ketone could arise if the R-PKS rdc5 and NR-PKS rdc1 each carry out four iterations, in contrast to the five iteration-three iteration split for the hypothemycin PKSs. The origin of the cis 5',6' double bond is not known. The radicicol R-PKS rdc5 ER domain may catalyze either double bond isomerization or reduction in the third iteration. In Metacordyceps chlamydosporia (Nematophagous fungus), this protein is Reducing polyketide synthase rdc5.